Reading from the N-terminus, the 595-residue chain is Protein kinase C iota type (595 aa).

Over residues 1–12 (MPTQRDSSTMSH) the composition is skewed to polar residues. The disordered stretch occupies residues 1–21 (MPTQRDSSTMSHTVACGGGGD). Pro-2 bears the N-acetylproline mark. Positions 2 to 28 (PTQRDSSTMSHTVACGGGGDHSHQVRV) are required for interaction with RAB2. The interval 2–252 (PTQRDSSTMS…KASSSLGLQD (251 aa)) is regulatory domain. Thr-3 bears the Phosphothreonine mark. Ser-7 and Ser-8 each carry phosphoserine. Thr-9 carries the phosphothreonine modification. The region spanning 25–108 (QVRVKAYYRG…SELLIHVFPC (84 aa)) is the PB1 domain. The interaction with PARD6A stretch occupies residues 72–91 (DEEGDPCTVSSQLELEEAFR). A Pseudosubstrate motif is present at residues 125–134 (YRRGARRWRK). The Phorbol-ester/DAG-type zinc finger occupies 140 to 190 (GHTFQAKRFNRRAHCAICTDRIWGLGRQGYKCINCKLLVHKKCHKLVTIEC). Residues 253–521 (FDLLRVIGRG…FADIQGHPFF (269 aa)) form the Protein kinase domain. Residue 259–267 (IGRGSYAKV) participates in ATP binding. Residues Tyr-264 and Tyr-279 each carry the phosphotyrosine; by SRC modification. ATP is bound at residue Lys-282. Tyr-333 is subject to Phosphotyrosine; by SRC. Residue Asp-377 is the Proton acceptor of the active site. 2 positions are modified to phosphothreonine: Thr-411 and Thr-563. One can recognise an AGC-kinase C-terminal domain in the interval 522-593 (RNVDWDMMEQ…INPLLMSAEE (72 aa)).

It belongs to the protein kinase superfamily. AGC Ser/Thr protein kinase family. PKC subfamily. In terms of assembly, forms a complex with SQSTM1 and MP2K5. Interacts directly with SQSTM1. Interacts with IKBKB. Interacts with PARD6A, PARD6B and PARD6G. Part of a quaternary complex containing aPKC, PARD3, a PARD6 protein (PARD6A, PARD6B or PARD6G) and a GTPase protein (CDC42 or RAC1). Part of a complex with LLGL1 and PARD6B. Interacts with ADAP1/CENTA1. Interaction with SMG1, through the ZN-finger domain, activates the kinase activity. Interacts with CDK7. Forms a complex with RAB2A and GAPDH involved in recruitment onto the membrane of vesicular tubular clusters (VTCs). Interacts with ECT2 ('Thr-359' phosphorylated form). Interacts with VAMP2. Interacts with WDFY2 (via WD repeats 1-3). Phosphorylation at Thr-411 in the activation loop is not mandatory for activation. Upon neuronal growth factor (NGF) stimulation, phosphorylated by SRC at Tyr-264, Tyr-279 and Tyr-333. Phosphorylation on Tyr-264 facilitates binding to KPNB1/importin-beta regulating entry of PRKCI into the nucleus. Phosphorylation on Tyr-333 is important for NF-kappa-B stimulation. Phosphorylated at Thr-563 during the initial phase of long term potentiation.

It is found in the cytoplasm. It localises to the membrane. The protein resides in the endosome. Its subcellular location is the nucleus. The catalysed reaction is L-seryl-[protein] + ATP = O-phospho-L-seryl-[protein] + ADP + H(+). It carries out the reaction L-threonyl-[protein] + ATP = O-phospho-L-threonyl-[protein] + ADP + H(+). With respect to regulation, atypical PKCs (PRKCI and PRKCZ) exhibit an elevated basal enzymatic activity (that may be due to the interaction with SMG1 or SQSTM1) and are not regulated by diacylglycerol, phosphatidylserine, phorbol esters or calcium ions. Two specific sites, Thr-411 (activation loop of the kinase domain) and Thr-563 (turn motif), need to be phosphorylated for its full activation. Might also be a target for novel lipid activators that are elevated during nutrient-stimulated insulin secretion. Calcium- and diacylglycerol-independent serine/ threonine-protein kinase that plays a general protective role against apoptotic stimuli, is involved in NF-kappa-B activation, cell survival, differentiation and polarity, and contributes to the regulation of microtubule dynamics in the early secretory pathway. Is necessary for BCR-ABL oncogene-mediated resistance to apoptotic drug in leukemia cells, protecting leukemia cells against drug-induced apoptosis. In cultured neurons, prevents amyloid beta protein-induced apoptosis by interrupting cell death process at a very early step. In glioblastoma cells, may function downstream of phosphatidylinositol 3-kinase (PI3K) and PDPK1 in the promotion of cell survival by phosphorylating and inhibiting the pro-apoptotic factor BAD. Can form a protein complex in non-small cell lung cancer (NSCLC) cells with PARD6A and ECT2 and regulate ECT2 oncogenic activity by phosphorylation, which in turn promotes transformed growth and invasion. In response to nerve growth factor (NGF), acts downstream of SRC to phosphorylate and activate IRAK1, allowing the subsequent activation of NF-kappa-B and neuronal cell survival. Functions in the organization of the apical domain in epithelial cells by phosphorylating EZR. This step is crucial for activation and normal distribution of EZR at the early stages of intestinal epithelial cell differentiation. Forms a protein complex with LLGL1 and PARD6B independently of PARD3 to regulate epithelial cell polarity. Plays a role in microtubule dynamics in the early secretory pathway through interaction with RAB2A and GAPDH and recruitment to vesicular tubular clusters (VTCs). In human coronary artery endothelial cells (HCAEC), is activated by saturated fatty acids and mediates lipid-induced apoptosis. Downstream of PI3K is required for insulin-stimulated glucose transport. Activates RAB4A and promotes its association with KIF3A which is required for the insulin-induced SLC2A4/GLUT4 translocation in adipocytes. Is essential in early embryogenesis and development of differentiating photoreceptors by playing a role in the establishment of epithelial and neuronal polarity. Involved in early synaptic long term potentiation phase in CA1 hippocampal cells and short term memory formation. The polypeptide is Protein kinase C iota type (Prkci) (Mus musculus (Mouse)).